The sequence spans 2136 residues: MADVTARSLQYEYKANSNLVLQADRSLIDRTRRDEPTGEVLSLVGKLEGTRMGDKAQRTKPQMQEERRAKRRKRDEDRHDINKMKGYTLLSEGIDEMVGIIYKPKTKETRETYEVLLSFIQAALGDQPRDILCGAADEVLAVLKNEKLRDKERRKEIDLLLGQTDDTRYHVLVNLGKKITDYGGDKEIQNMDDNIDETYGVNVQFESDEEEGDEDVYGEVREEASDDDMEGDEAVVRCTLSANLVASGELMSSKKKDLHPRDIDAFWLQRQLSRFYDDAIVSQKKADEVLEILKTASDDRECENQLVLLLGFNTFDFIKVLRQHRMMILYCTLLASAQSEAEKERIMGKMEADPELSKFLYQLHETEKEDLIREERSRRERVRQSRMDTDLETMDLDQGGEALAPRQVLDLEDLVFTQGSHFMANKRCQLPDGSFRRQRKGYEEVHVPALKPKPFGSEEQLLPVEKLPKYAQAGFEGFKTLNRIQSKLYRAALETDENLLLCAPTGAGKTNVALMCMLREIGKHINMDGTINVDDFKIIYIAPMRSLVQEMVGSFGKRLATYGITVAELTGDHQLCKEEISATQIIVCTPEKWDIITRKGGERTYTQLVRLIILDEIHLLHDDRGPVLEALVARAIRNIEMTQEDVRLIGLSATLPNYEDVATFLRVDPAKGLFYFDNSFRPVPLEQTYVGITEKKAIKRFQIMNEIVYEKIMEHAGKNQVLVFVHSRKETGKTARAIRDMCLEKDTLGLFLREGSASTEVLRTEAEQCKNLELKDLLPYGFAIHHAGMTRVDRTLVEDLFADKHIQVLVSTATLAWGVNLPAHTVIIKGTQVYSPEKGRWTELGALDILQMLGRAGRPQYDTKGEGILITSHGELQYYLSLLNQQLPIESQMVSKLPDMLNAEIVLGNVQNAKDAVNWLGYAYLYIRMLRSPTLYGISHDDLKGDPLLDQRRLDLVHTAALMLDKNNLVKYDKKTGNFQVTELGRIASHYYITNDTVQTYNQLLKPTLSEIELFRVFSLSSEFKNITVREEEKLELQKLLERVPIPVKESIEEPSAKINVLLQAFISQLKLEGFALMADMVYVTQSAGRLMRAIFEIVLNRGWAQLTDKTLNLCKMIDKRMWQSMCPLRQFRKLPEEVVKKIEKKNFPFERLYDLNHNEIGELIRMPKMGKTIHKYVHLFPKLELSVHLQPITRSTLKVELTITPDFQWDEKVHGSSEAFWILVEDVDSEVILHHEYFLLKAKYAQDEHLITFFVPVFEPLPPQYFIRVVSDRWLSCETQLPVSFRHLILPEKYPPPTELLDLQPLPVSALRNSAFESLYQDKFPFFNPIQTQVFNTVYNSDDNVFVGAPTGSGKTICAEFAILRMLLQSSEGRCVYITPMEALAEQVYMDWYEKFQDRLNKKVVLLTGETSTDLKLLGKGNIIISTPEKWDILSRRWKQRKNVQNINLFVVDEVHLIGGENGPVLEVICSRMRYISSQIERPIRIVALSSSLSNAKDVAHWLGCSATSTFNFHPNVRPVPLELHIQGFNISHTQTRLLSMAKPVYHAITKHSPKKPVIVFVPSRKQTRLTAIDILTTCAADIQRQRFLHCTEKDLIPYLEKLSDSTLKETLLNGVGYLHEGLSPMERRLVEQLFSSGAIQVVVASRSLCWGMNVAAHLVIIMDTQYYNGKIHAYVDYPIYDVLQMVGHANRPLQDDEGRCVIMCQGSKKDFFKKFLYEPLPVESHLDHCMHDHFNAEIVTKTIENKQDAVDYLTWTFLYRRMTQNPNYYNLQGISHRHLSDHLSELVEQTLSDLEQSKCISIEDEMDVAPLNLGMIAAYYYINYTTIELFSMSLNAKTKVRGLIEIISNAAEYENIPIRHHEDNLLRQLAQKVPHKLNNPKFNDPHVKTNLLLQAHLSRMQLSAELQSDTEEILSKAIRLIQACVDVLSSNGWLSPALAAMELAQMVTQAMWSKDSYLKQLPHFTSEHIKRCTDKGVESVFDIMEMEDEERNALLQLTDSQIADVARFCNRYPNIELSYEVVDKDSIRSGGPVVVLVQLEREEEVTGPVIAPLFPQKREEGWWVVIGDAKSNSLISIKRLTLQQKAKVKLDFVAPATGAHNYTLYFMSDAYMGCDQEYKFSVDVKEAETDSDSD.

2 positions are modified to phosphoserine: Ser-17 and Ser-26. A Glycyl lysine isopeptide (Lys-Gly) (interchain with G-Cter in SUMO2) cross-link involves residue Lys-46. Residues 50-80 are disordered; the sequence is TRMGDKAQRTKPQMQEERRAKRRKRDEDRHD. A coiled-coil region spans residues 54 to 84; sequence DKAQRTKPQMQEERRAKRRKRDEDRHDINKM. The residue at position 225 (Ser-225) is a Phosphoserine. A Phosphothreonine modification is found at Thr-389. The segment at 395–2129 is interaction with C9orf78 and WBP4; it reads DLDQGGEALA…YKFSVDVKEA (1735 aa). A Helicase ATP-binding 1 domain is found at 490–673; the sequence is RAALETDENL…FLRVDPAKGL (184 aa). An ATP-binding site is contributed by 503-510; that stretch reads APTGAGKT. Positions 615-618 match the DEIH box motif; it reads DEIH. The Helicase C-terminal 1 domain occupies 684 to 921; sequence PLEQTYVGIT…NAKDAVNWLG (238 aa). Phosphotyrosine is present on Tyr-709. Lys-971 carries the N6-acetyllysine modification. The region spanning 981–1286 is the SEC63 1 domain; it reads VTELGRIASH…SCETQLPVSF (306 aa). Residues 1282–2136 are interaction with TSSC4; sequence LPVSFRHLIL…KEAETDSDSD (855 aa). The Helicase ATP-binding 2 domain occupies 1337–1512; the sequence is NTVYNSDDNV…WLGCSATSTF (176 aa). 1350–1357 contacts ATP; it reads APTGSGKT. Phosphothreonine is present on Thr-1428. The DEVH box signature appears at 1454–1457; sequence DEVH. The 209-residue stretch at 1545–1753 folds into the Helicase C-terminal 2 domain; it reads PVYHAITKHS…TIENKQDAVD (209 aa). Thr-1765 bears the Phosphothreonine mark. In terms of domain architecture, SEC63 2 spans 1812-2124; that stretch reads PLNLGMIAAY…GCDQEYKFSV (313 aa). The residue at position 2002 (Ser-2002) is a Phosphoserine. Thr-2131 carries the post-translational modification Phosphothreonine. 2 positions are modified to phosphoserine: Ser-2133 and Ser-2135.

The protein belongs to the helicase family. SKI2 subfamily. Component of a core complex containing at least PRPF8, SNRNP200, EFTUD2 and SNRNP40. Component of the U5 snRNP and U4/U6-U5 tri-snRNP complexes, building blocks of the spliceosome. Component of the U4/U6-U5 tri-snRNP complex composed of the U4, U6 and U5 snRNAs and at least PRPF3, PRPF4, PRPF6, PRPF8, PRPF31, SNRNP200, TXNL4A, SNRNP40, DDX23, CD2BP2, PPIH, SNU13, EFTUD2, SART1 and USP39. Component of precatalytic, catalytic and postcatalytic spliceosomal complexes. Component of the minor spliceosome, which splices U12-type introns. Interacts with C9orf78; the interaction is direct and mutually exclusive with its interaction with WBP4. Interacts with WBP4; the interaction is mutually exclusive with its interaction with C9orf78. Interacts with PRPF8. Interacts with TSSC4; the interaction is direct, excludes recruitment of C9ORF78 and WBP4 to SNRNP200 and negatively regulates its RNA helicase activity. In terms of tissue distribution, widely expressed.

The protein localises to the nucleus. The enzyme catalyses ATP + H2O = ADP + phosphate + H(+). Catalyzes the ATP-dependent unwinding of U4/U6 RNA duplices, an essential step in the assembly of a catalytically active spliceosome. Plays a role in pre-mRNA splicing as a core component of precatalytic, catalytic and postcatalytic spliceosomal complexes. As a component of the minor spliceosome, involved in the splicing of U12-type introns in pre-mRNAs. Involved in spliceosome assembly, activation and disassembly. Mediates changes in the dynamic network of RNA-RNA interactions in the spliceosome. The sequence is that of U5 small nuclear ribonucleoprotein 200 kDa helicase (SNRNP200) from Homo sapiens (Human).